Consider the following 213-residue polypeptide: Histone H1.2 (213 aa).

Residues 1-17 (MSETAPAAPAAAPPAEK) show a composition bias toward low complexity. The disordered stretch occupies residues 1 to 41 (MSETAPAAPAAAPPAEKAPVKKKAAKKAGGTPRKASGPPVS). Ser-2 is modified (N-acetylserine; partial). Ser-2 carries the phosphoserine modification. Residue Lys-17 is modified to N6-acetyllysine. An N6-(2-hydroxyisobutyryl)lysine mark is found at Lys-23, Lys-26, and Lys-27. Lys-34 is modified (N6-(beta-hydroxybutyryl)lysine; alternate). Position 34 is an N6-crotonyllysine; alternate (Lys-34). An N6-methyllysine; alternate modification is found at Lys-34. Positions 36-109 (SGPPVSELIT…GASGSFKLNK (74 aa)) constitute an H15 domain. An N6-(2-hydroxyisobutyryl)lysine modification is found at Lys-46. At Lys-52 the chain carries N6-(beta-hydroxybutyryl)lysine; alternate. At Lys-52 the chain carries N6-(2-hydroxyisobutyryl)lysine; alternate. Position 54 is a citrulline (Arg-54). N6-(2-hydroxyisobutyryl)lysine is present on Lys-63. At Lys-64 the chain carries N6-(beta-hydroxybutyryl)lysine; alternate. Position 64 is an N6-crotonyllysine; alternate (Lys-64). At Lys-64 the chain carries N6-(2-hydroxyisobutyryl)lysine; alternate. N6-(2-hydroxyisobutyryl)lysine occurs at positions 75 and 81. 2 positions are modified to N6-(beta-hydroxybutyryl)lysine; alternate: Lys-85 and Lys-90. Lys-85, Lys-90, and Lys-97 each carry N6-crotonyllysine; alternate. N6-(2-hydroxyisobutyryl)lysine; alternate occurs at positions 85, 90, and 97. The segment at 92-213 (TLVQTKGTGA…KPKKAAPKKK (122 aa)) is disordered. Lys-97 is subject to N6-succinyllysine; alternate. Phosphoserine; by PKC is present on Ser-104. Lys-106 carries the N6-(beta-hydroxybutyryl)lysine modification. Residues Lys-110, Lys-117, Lys-121, Lys-129, and Lys-136 each carry the N6-(2-hydroxyisobutyryl)lysine modification. The segment covering 119–140 (KVKKAGGTKPKKPVGAAKKPKK) has biased composition (basic residues). Thr-146 bears the Phosphothreonine mark. Lys-148 is modified (N6-(2-hydroxyisobutyryl)lysine). Over residues 149–160 (KSAKKTPKKAKK) the composition is skewed to basic residues. Residues Lys-159 and Lys-168 each carry the N6-crotonyllysine; alternate modification. N6-(2-hydroxyisobutyryl)lysine; alternate is present on residues Lys-159 and Lys-168. Basic residues predominate over residues 169-186 (KVAKSPKKAKVAKPKKAA). Residue Lys-187 is modified to N6-methyllysine; by EHMT1 and EHMT2. Ser-188 is subject to ADP-ribosylserine. The span at 193–213 (VKPKAAKPKVVKPKKAAPKKK) shows a compositional bias: basic residues. Residue Lys-213 is modified to N6-(2-hydroxyisobutyryl)lysine.

This sequence belongs to the histone H1/H5 family. As to quaternary structure, interacts with TSC22D1 isoforms 2 and 5. H1 histones are progressively phosphorylated during the cell cycle, becoming maximally phosphorylated during late G2 phase and M phase, and being dephosphorylated sharply thereafter. In terms of processing, crotonylation (Kcr) is specifically present in male germ cells and marks testis-specific genes in post-meiotic cells, including X-linked genes that escape sex chromosome inactivation in haploid cells. Crotonylation marks active promoters and enhancers and confers resistance to transcriptional repressors. It is also associated with post-meiotically activated genes on autosomes. Post-translationally, citrullination at Arg-54 (H1R54ci) by PADI4 takes place within the DNA-binding site of H1 and results in its displacement from chromatin and global chromatin decondensation, thereby promoting pluripotency and stem cell maintenance. ADP-ribosylated on Ser-188 in response to DNA damage.

It localises to the nucleus. It is found in the chromosome. Functionally, histone H1 protein binds to linker DNA between nucleosomes forming the macromolecular structure known as the chromatin fiber. Histones H1 are necessary for the condensation of nucleosome chains into higher-order structured fibers. Also acts as a regulator of individual gene transcription through chromatin remodeling, nucleosome spacing and DNA methylation. In Homo sapiens (Human), this protein is Histone H1.2.